Reading from the N-terminus, the 281-residue chain is Energy-coupling factor transporter ATP-binding protein EcfA1 (281 aa).

The 236-residue stretch at 7-242 folds into the ABC transporter domain; it reads IAAEDITFRY…NQDLIKIGLD (236 aa). ATP is bound at residue 42-49; that stretch reads GHNGSGKS.

It belongs to the ABC transporter superfamily. Energy-coupling factor EcfA family. As to quaternary structure, forms a stable energy-coupling factor (ECF) transporter complex composed of 2 membrane-embedded substrate-binding proteins (S component), 2 ATP-binding proteins (A component) and 2 transmembrane proteins (T component).

It is found in the cell membrane. Its function is as follows. ATP-binding (A) component of a common energy-coupling factor (ECF) ABC-transporter complex. Unlike classic ABC transporters this ECF transporter provides the energy necessary to transport a number of different substrates. The protein is Energy-coupling factor transporter ATP-binding protein EcfA1 of Bacillus licheniformis (strain ATCC 14580 / DSM 13 / JCM 2505 / CCUG 7422 / NBRC 12200 / NCIMB 9375 / NCTC 10341 / NRRL NRS-1264 / Gibson 46).